A 281-amino-acid polypeptide reads, in one-letter code: NAD kinase (281 aa).

Residue D66 is the Proton acceptor of the active site. Residues 66 to 67 (DG), 137 to 138 (ND), R148, R165, D167, and 178 to 183 (TAYSMS) each bind NAD(+).

This sequence belongs to the NAD kinase family. It depends on a divalent metal cation as a cofactor.

The protein localises to the cytoplasm. It catalyses the reaction NAD(+) + ATP = ADP + NADP(+) + H(+). Functionally, involved in the regulation of the intracellular balance of NAD and NADP, and is a key enzyme in the biosynthesis of NADP. Catalyzes specifically the phosphorylation on 2'-hydroxyl of the adenosine moiety of NAD to yield NADP. The sequence is that of NAD kinase from Chlorobium phaeovibrioides (strain DSM 265 / 1930) (Prosthecochloris vibrioformis (strain DSM 265)).